Consider the following 408-residue polypeptide: Arginine biosynthesis bifunctional protein ArgJ (408 aa).

Residues T158, K184, T195, E281, N403, and T408 each coordinate substrate. Residue T195 is the Nucleophile of the active site.

Belongs to the ArgJ family. Heterotetramer of two alpha and two beta chains.

The protein localises to the cytoplasm. It carries out the reaction N(2)-acetyl-L-ornithine + L-glutamate = N-acetyl-L-glutamate + L-ornithine. The catalysed reaction is L-glutamate + acetyl-CoA = N-acetyl-L-glutamate + CoA + H(+). It participates in amino-acid biosynthesis; L-arginine biosynthesis; L-ornithine and N-acetyl-L-glutamate from L-glutamate and N(2)-acetyl-L-ornithine (cyclic): step 1/1. Its pathway is amino-acid biosynthesis; L-arginine biosynthesis; N(2)-acetyl-L-ornithine from L-glutamate: step 1/4. Catalyzes two activities which are involved in the cyclic version of arginine biosynthesis: the synthesis of N-acetylglutamate from glutamate and acetyl-CoA as the acetyl donor, and of ornithine by transacetylation between N(2)-acetylornithine and glutamate. This chain is Arginine biosynthesis bifunctional protein ArgJ, found in Bacillus thuringiensis subsp. konkukian (strain 97-27).